The following is a 98-amino-acid chain: Tan_12Cys (98 aa).

The signal sequence occupies residues 1 to 21 (MNLKVLFLLAMVLVTLCLGED). The propeptide occupies 22-28 (RVTDRRK).

This sequence belongs to the teretoxin C (TC) superfamily. Contains 6 disulfide bonds. Expressed by the venom duct.

Its subcellular location is the secreted. This chain is Tan_12Cys, found in Terebra anilis (Auger snail).